Reading from the N-terminus, the 528-residue chain is Protein arginine N-methyltransferase 3 (528 aa).

A disordered region spans residues 1-42 (MCSLAAGNGQGAELGPEPLELSDSGDDAGWEDEDADAEPAQG). The residue at position 2 (Cys-2) is an N-acetylcysteine. A phosphoserine mark is found at Ser-22 and Ser-24. Over residues 23–37 (DSGDDAGWEDEDADA) the composition is skewed to acidic residues. A C2H2-type zinc finger spans residues 46-69 (TPCLFCDRLFRSAEETFSHCKLEH). Residue Ser-169 is modified to Phosphoserine. The interval 184–528 (MKQFAQDFVM…NSSTQTYSLQ (345 aa)) is mediates interaction with ALDH1A1. The SAM-dependent MTase PRMT-type domain occupies 214–528 (DGVYFSSYGH…NSSTQTYSLQ (315 aa)). Residues Arg-236, Gly-260, Asp-282, Ser-284, Ile-310, and Glu-311 each coordinate S-adenosyl-L-homocysteine. Catalysis depends on residues Glu-326 and Glu-335.

Belongs to the class I-like SAM-binding methyltransferase superfamily. Protein arginine N-methyltransferase family. Monomer and homodimer. Interacts with EPB41L3 (via FERM domain); the interaction is direct and inhibits the protein-arginine N-methyltransferase activity of PRMT3. Interacts with the 40S ribosomal protein RPS2. Interacts with ALDH1A1; the interaction is direct, inhibits ALDH1A1 aldehyde dehydrogenase activity and is independent of the methyltransferase activity of PRMT3. Ubiquitously expressed.

Its subcellular location is the cytoplasm. The protein resides in the cytosol. It localises to the nucleus. It catalyses the reaction L-arginyl-[protein] + S-adenosyl-L-methionine = N(omega)-methyl-L-arginyl-[protein] + S-adenosyl-L-homocysteine + H(+). The enzyme catalyses L-arginyl-[protein] + 2 S-adenosyl-L-methionine = N(omega),N(omega)-dimethyl-L-arginyl-[protein] + 2 S-adenosyl-L-homocysteine + 2 H(+). Its activity is regulated as follows. Inhibited by N-ethylmaleimide and high concentrations of zinc chloride. Protein-arginine N-methyltransferase that catalyzes both the monomethylation and asymmetric dimethylation of the guanidino nitrogens of arginine residues in target proteins, and therefore falls into the group of type I methyltransferases. Catalyzes the asymmetric arginine dimethylation at multiple sites in the Arg/Gly-rich region of small ribosomal subunit protein uS5/RPS2. Also appears to methylate other ribosomal proteins. May regulate retinoic acid synthesis and signaling by inhibiting ALDH1A1 retinal dehydrogenase activity. Contributes to methylation of histone H4 'Arg-3', a specific tag for epigenetic transcriptional activation. Promotes osteogenesis. In Rattus norvegicus (Rat), this protein is Protein arginine N-methyltransferase 3.